The following is a 61-amino-acid chain: Small ribosomal subunit protein uS14 (61 aa).

Zn(2+) contacts are provided by C24, C27, C40, and C43.

The protein belongs to the universal ribosomal protein uS14 family. Zinc-binding uS14 subfamily. Part of the 30S ribosomal subunit. Contacts proteins S3 and S10. It depends on Zn(2+) as a cofactor.

Binds 16S rRNA, required for the assembly of 30S particles and may also be responsible for determining the conformation of the 16S rRNA at the A site. This Frankia alni (strain DSM 45986 / CECT 9034 / ACN14a) protein is Small ribosomal subunit protein uS14.